We begin with the raw amino-acid sequence, 636 residues long: 1-deoxy-D-xylulose-5-phosphate synthase (636 aa).

Residues His84 and 125-127 (GHS) contribute to the thiamine diphosphate site. Asp156 contacts Mg(2+). Residues 157 to 158 (GA), Asn185, Phe292, and Glu375 contribute to the thiamine diphosphate site. Asn185 is a Mg(2+) binding site.

The protein belongs to the transketolase family. DXPS subfamily. As to quaternary structure, homodimer. Mg(2+) is required as a cofactor. Thiamine diphosphate serves as cofactor.

The catalysed reaction is D-glyceraldehyde 3-phosphate + pyruvate + H(+) = 1-deoxy-D-xylulose 5-phosphate + CO2. Its pathway is metabolic intermediate biosynthesis; 1-deoxy-D-xylulose 5-phosphate biosynthesis; 1-deoxy-D-xylulose 5-phosphate from D-glyceraldehyde 3-phosphate and pyruvate: step 1/1. Its function is as follows. Catalyzes the acyloin condensation reaction between C atoms 2 and 3 of pyruvate and glyceraldehyde 3-phosphate to yield 1-deoxy-D-xylulose-5-phosphate (DXP). In Cellvibrio japonicus (strain Ueda107) (Pseudomonas fluorescens subsp. cellulosa), this protein is 1-deoxy-D-xylulose-5-phosphate synthase.